The following is a 445-amino-acid chain: Ribosomal protein uS12 methylthiotransferase RimO (445 aa).

The region spanning 10–120 is the MTTase N-terminal domain; sequence PKVGFVSLGC…VVNAVHEVVP (111 aa). Cys-19, Cys-55, Cys-84, Cys-153, Cys-157, and Cys-160 together coordinate [4Fe-4S] cluster. Residues 139 to 378 enclose the Radical SAM core domain; that stretch reads LTPRHYAYLK…AHQQAISSAR (240 aa). A TRAM domain is found at 380–445; that stretch reads QLRIGREIEV…DEYDLWAEQI (66 aa).

Belongs to the methylthiotransferase family. RimO subfamily. [4Fe-4S] cluster serves as cofactor.

It is found in the cytoplasm. The enzyme catalyses L-aspartate(89)-[ribosomal protein uS12]-hydrogen + (sulfur carrier)-SH + AH2 + 2 S-adenosyl-L-methionine = 3-methylsulfanyl-L-aspartate(89)-[ribosomal protein uS12]-hydrogen + (sulfur carrier)-H + 5'-deoxyadenosine + L-methionine + A + S-adenosyl-L-homocysteine + 2 H(+). In terms of biological role, catalyzes the methylthiolation of an aspartic acid residue of ribosomal protein uS12. The protein is Ribosomal protein uS12 methylthiotransferase RimO of Pseudomonas fluorescens (strain Pf0-1).